A 385-amino-acid chain; its full sequence is Succinate--CoA ligase [ADP-forming] subunit beta (385 aa).

The region spanning 9–244 (KEVLRKYGVS…LDEEDPKEIE (236 aa)) is the ATP-grasp domain. ATP contacts are provided by residues Lys46, 53-55 (GRG), Glu99, Cys102, and Glu107. Mg(2+) contacts are provided by Asn199 and Asp213. Substrate is bound by residues Asn264 and 321–323 (GIM).

The protein belongs to the succinate/malate CoA ligase beta subunit family. Heterotetramer of two alpha and two beta subunits. Mg(2+) is required as a cofactor.

The enzyme catalyses succinate + ATP + CoA = succinyl-CoA + ADP + phosphate. It catalyses the reaction GTP + succinate + CoA = succinyl-CoA + GDP + phosphate. It participates in carbohydrate metabolism; tricarboxylic acid cycle; succinate from succinyl-CoA (ligase route): step 1/1. In terms of biological role, succinyl-CoA synthetase functions in the citric acid cycle (TCA), coupling the hydrolysis of succinyl-CoA to the synthesis of either ATP or GTP and thus represents the only step of substrate-level phosphorylation in the TCA. The beta subunit provides nucleotide specificity of the enzyme and binds the substrate succinate, while the binding sites for coenzyme A and phosphate are found in the alpha subunit. This is Succinate--CoA ligase [ADP-forming] subunit beta from Bacillus velezensis (strain DSM 23117 / BGSC 10A6 / LMG 26770 / FZB42) (Bacillus amyloliquefaciens subsp. plantarum).